The primary structure comprises 348 residues: Phospho-N-acetylmuramoyl-pentapeptide-transferase (348 aa).

Helical transmembrane passes span 11 to 31, 68 to 88, 92 to 112, 128 to 148, 165 to 185, 196 to 216, 222 to 242, 251 to 271, 276 to 296, and 326 to 346; these read SWMLLLATVFGLAFFLGIFLG, AGGILFCIVLLTTVFLWLPLG, TWLFVFLIISWGTLGWYDDII, FVIQLIISAITIVTIFSIYKG, VGHSILGKFFYFVLAMLTIVG, LDGLAAGTTCMSALGLLVVAL, PLAQDVSIVLSALIGISFAFL, VFMGDTGSLLIGGVLGSCAVM, LLLILLGGVFVAEAGSVILQV, and VVARFYIAGLLCMILGIIAAL.

This sequence belongs to the glycosyltransferase 4 family. MraY subfamily. Requires Mg(2+) as cofactor.

The protein resides in the cell inner membrane. The enzyme catalyses UDP-N-acetyl-alpha-D-muramoyl-L-alanyl-gamma-D-glutamyl-meso-2,6-diaminopimeloyl-D-alanyl-D-alanine + di-trans,octa-cis-undecaprenyl phosphate = di-trans,octa-cis-undecaprenyl diphospho-N-acetyl-alpha-D-muramoyl-L-alanyl-D-glutamyl-meso-2,6-diaminopimeloyl-D-alanyl-D-alanine + UMP. It functions in the pathway cell wall biogenesis; peptidoglycan biosynthesis. Its function is as follows. Catalyzes the initial step of the lipid cycle reactions in the biosynthesis of the cell wall peptidoglycan: transfers peptidoglycan precursor phospho-MurNAc-pentapeptide from UDP-MurNAc-pentapeptide onto the lipid carrier undecaprenyl phosphate, yielding undecaprenyl-pyrophosphoryl-MurNAc-pentapeptide, known as lipid I. This chain is Phospho-N-acetylmuramoyl-pentapeptide-transferase, found in Chlamydia caviae (strain ATCC VR-813 / DSM 19441 / 03DC25 / GPIC) (Chlamydophila caviae).